The chain runs to 377 residues: Transcription initiation factor IIA subunit 1 (377 aa).

Position 2 is an N-acetylalanine (Ala-2). Low complexity-rich tracts occupy residues 69-79 (QVQQQHQPQQQ), 89-105 (QAQP…TQQV), and 248-280 (QAQI…TGDT). Disordered regions lie at residues 69–107 (QVQQ…QVLI) and 248–330 (QAQI…QELF). Ser-281 and Ser-282 each carry phosphoserine; by TAF1. Positions 281 to 330 (SSEEDEDEEEDYDDDEEEDKEKDGAEDGQVEEEPLNSEDDVSDEEGQELF) are enriched in acidic residues. Residues Ser-317 and Ser-322 each carry the phosphoserine modification. DNA-binding residues include His-344 and Arg-345.

Belongs to the TFIIA subunit 1 family. In terms of assembly, TFIIA is a heterodimer of the large unprocessed subunit 1 and a small subunit gamma. It was originally believed to be a heterotrimer of an alpha (p35), a beta (p19) and a gamma subunit (p12). TFIIA forms a complex with TBP. Part of TBP-based Pol II pre-initiation complex (PIC), in which Pol II core assembles with general transcription factors and other specific initiation factors including GTF2E1, GTF2E2, GTF2F1, GTF2F2, TCEA1, ERCC2, ERCC3, GTF2H2, GTF2H3, GTF2H4, GTF2H5, GTF2A1, GTF2A2, GTF2B and TBP; this large multi-subunit PIC complex mediates DNA unwinding and targets Pol II core to the transcription start site where the first phosphodiester bond forms. In terms of processing, the alpha and beta subunits are postranslationally produced from the precursor formby TASP1. The cleavage promotes proteasomal degradation.

It localises to the nucleus. Its function is as follows. TFIIA is a component of the transcription machinery of RNA polymerase II and plays an important role in transcriptional activation. TFIIA in a complex with TBP mediates transcriptional activity. The polypeptide is Transcription initiation factor IIA subunit 1 (Gtf2a1) (Rattus norvegicus (Rat)).